We begin with the raw amino-acid sequence, 569 residues long: S-(+)-linalool synthase, chloroplastic (569 aa).

The transit peptide at 1–39 directs the protein to the chloroplast; that stretch reads MALIATKISSRSCFVSAYPNNSPTFLISKFPNTVDSLSP. The (2E)-geranyl diphosphate site is built by arginine 294, aspartate 331, aspartate 335, arginine 472, and aspartate 475. 2 residues coordinate Mg(2+): aspartate 331 and aspartate 335. A DDXXD motif motif is present at residues 331–335; sequence DDIFD. The Mg(2+) site is built by aspartate 475, serine 479, and glutamate 483.

The protein belongs to the terpene synthase family. Tpsb subfamily. It depends on Mg(2+) as a cofactor. Requires Mn(2+) as cofactor. As to expression, predominantly expressed in flowers but also in stems and siliques.

It localises to the plastid. The protein resides in the chloroplast. The enzyme catalyses (2E)-geranyl diphosphate + H2O = (S)-linalool + diphosphate. It functions in the pathway secondary metabolite biosynthesis; terpenoid biosynthesis. Its function is as follows. Involved in monoterpene (C10) biosynthesis. The major product is (S)-linalool. This Arabidopsis thaliana (Mouse-ear cress) protein is S-(+)-linalool synthase, chloroplastic.